Consider the following 567-residue polypeptide: DNA ligase B (567 aa).

Residue K132 is the N6-AMP-lysine intermediate of the active site.

It belongs to the NAD-dependent DNA ligase family. LigB subfamily.

It carries out the reaction NAD(+) + (deoxyribonucleotide)n-3'-hydroxyl + 5'-phospho-(deoxyribonucleotide)m = (deoxyribonucleotide)n+m + AMP + beta-nicotinamide D-nucleotide.. Catalyzes the formation of phosphodiester linkages between 5'-phosphoryl and 3'-hydroxyl groups in double-stranded DNA using NAD as a coenzyme and as the energy source for the reaction. This is DNA ligase B from Yersinia pestis.